Here is a 136-residue protein sequence, read N- to C-terminus: Histone H3.1 (136 aa).

The disordered stretch occupies residues methionine 1–arginine 43. Arginine 3 carries the asymmetric dimethylarginine; by PRMT6; alternate modification. Arginine 3 is subject to Citrulline; alternate. Residue threonine 4 is modified to Phosphothreonine; by HASPIN and VRK1. Lysine 5 is modified (allysine; alternate). At lysine 5 the chain carries N6,N6,N6-trimethyllysine; alternate. Lysine 5 is modified (N6,N6-dimethyllysine; alternate). Lysine 5 carries the post-translational modification N6-(2-hydroxyisobutyryl)lysine; alternate. An N6-(beta-hydroxybutyryl)lysine; alternate modification is found at lysine 5. Residue lysine 5 is modified to N6-acetyllysine; alternate. Lysine 5 carries the N6-crotonyllysine; alternate modification. Residue lysine 5 is modified to N6-methyllysine; alternate. Position 6 is a 5-glutamyl dopamine; alternate (glutamine 6). Glutamine 6 bears the 5-glutamyl serotonin; alternate mark. Residue threonine 7 is modified to Phosphothreonine; by PKC. Residue arginine 9 is modified to Citrulline; alternate. Arginine 9 bears the Symmetric dimethylarginine; by PRMT5; alternate mark. Lysine 10 is subject to N6,N6,N6-trimethyllysine; alternate. Lysine 10 bears the N6,N6-dimethyllysine; alternate mark. Lysine 10 bears the N6-(2-hydroxyisobutyryl)lysine; alternate mark. The residue at position 10 (lysine 10) is an N6-(beta-hydroxybutyryl)lysine; alternate. An N6-acetyllysine; alternate modification is found at lysine 10. At lysine 10 the chain carries N6-crotonyllysine; alternate. Lysine 10 carries the N6-methyllysine; alternate modification. The residue at position 10 (lysine 10) is an N6-butyryllysine; alternate. Lysine 10 is modified (N6-lactoyllysine; alternate). Position 11 is an ADP-ribosylserine; alternate (serine 11). Position 11 is a phosphoserine; alternate; by AURKB, AURKC, RPS6KA3, RPS6KA4 and RPS6KA5 (serine 11). At threonine 12 the chain carries Phosphothreonine; by PKC and CHEK1. Lysine 15 carries the N6-(2-hydroxyisobutyryl)lysine; alternate modification. At lysine 15 the chain carries N6-(beta-hydroxybutyryl)lysine; alternate. Lysine 15 is subject to N6-acetyllysine; alternate. Position 15 is an N6-lactoyllysine; alternate (lysine 15). Lysine 15 is subject to N6-glutaryllysine; alternate. Lysine 15 is subject to N6-succinyllysine; alternate. The residue at position 18 (arginine 18) is a Citrulline; alternate. The residue at position 18 (arginine 18) is an Asymmetric dimethylarginine; by CARM1; alternate. Lysine 19 and lysine 24 each carry N6-(2-hydroxyisobutyryl)lysine; alternate. N6-(beta-hydroxybutyryl)lysine; alternate occurs at positions 19 and 24. Lysine 19 and lysine 24 each carry N6-acetyllysine; alternate. N6-crotonyllysine; alternate is present on residues lysine 19 and lysine 24. 2 positions are modified to N6-methyllysine; alternate: lysine 19 and lysine 24. N6-butyryllysine; alternate occurs at positions 19 and 24. 2 positions are modified to N6-lactoyllysine; alternate: lysine 19 and lysine 24. 2 positions are modified to N6-glutaryllysine; alternate: lysine 19 and lysine 24. A lipid anchor (N6-decanoyllysine) is attached at lysine 19. Position 27 is a citrulline (arginine 27). The residue at position 28 (lysine 28) is an N6,N6,N6-trimethyllysine; alternate. Position 28 is an N6,N6-dimethyllysine; alternate (lysine 28). Lysine 28 carries the N6-(2-hydroxyisobutyryl)lysine; alternate modification. The residue at position 28 (lysine 28) is an N6-(beta-hydroxybutyryl)lysine; alternate. Lysine 28 bears the N6-acetyllysine; alternate mark. The residue at position 28 (lysine 28) is an N6-crotonyllysine; alternate. Lysine 28 carries the post-translational modification N6-methyllysine; alternate. Lysine 28 carries the post-translational modification N6-lactoyllysine; alternate. Lysine 28 carries the N6-glutaryllysine; alternate modification. Serine 29 carries the ADP-ribosylserine; alternate modification. Phosphoserine; alternate; by AURKB, AURKC and RPS6KA5 is present on serine 29. Residue lysine 37 is modified to N6,N6,N6-trimethyllysine; alternate. Lysine 37 is modified (N6,N6-dimethyllysine; alternate). N6-(2-hydroxyisobutyryl)lysine; alternate is present on lysine 37. Position 37 is an N6-acetyllysine; alternate (lysine 37). Position 37 is an N6-methyllysine; alternate (lysine 37). At lysine 38 the chain carries N6-methyllysine. At tyrosine 42 the chain carries Phosphotyrosine. Lysine 57 carries the N6,N6,N6-trimethyllysine; alternate modification. At lysine 57 the chain carries N6-(2-hydroxyisobutyryl)lysine; alternate. Residue lysine 57 is modified to N6-(beta-hydroxybutyryl)lysine; alternate. Position 57 is an N6-acetyllysine; alternate (lysine 57). At lysine 57 the chain carries N6-crotonyllysine; alternate. An N6-lactoyllysine; alternate modification is found at lysine 57. At lysine 57 the chain carries N6-glutaryllysine; alternate. N6-succinyllysine; alternate is present on lysine 57. Lysine 57 carries the N6-methyllysine; by EHMT2; alternate modification. Serine 58 carries the phosphoserine modification. N6-(2-hydroxyisobutyryl)lysine; alternate occurs at positions 65 and 80. Residues lysine 65 and lysine 80 each carry the N6-methyllysine; alternate modification. Lysine 80 is modified (N6,N6,N6-trimethyllysine; alternate). Residue lysine 80 is modified to N6,N6-dimethyllysine; alternate. At lysine 80 the chain carries N6-(beta-hydroxybutyryl)lysine; alternate. Lysine 80 is subject to N6-acetyllysine; alternate. Lysine 80 is modified (N6-lactoyllysine; alternate). Position 80 is an N6-glutaryllysine; alternate (lysine 80). Lysine 80 carries the N6-succinyllysine; alternate modification. Threonine 81 carries the phosphothreonine modification. Position 87 is a phosphoserine (serine 87). Residue threonine 108 is modified to Phosphothreonine. An N6-acetyllysine; alternate mark is found at lysine 116 and lysine 123. An N6-glutaryllysine; alternate mark is found at lysine 116 and lysine 123. N6-(2-hydroxyisobutyryl)lysine; alternate is present on lysine 123. N6-(beta-hydroxybutyryl)lysine; alternate is present on lysine 123. Lysine 123 is modified (N6-methyllysine; alternate). N6-succinyllysine; alternate is present on lysine 123.

It belongs to the histone H3 family. In terms of assembly, the nucleosome is a histone octamer containing two molecules each of H2A, H2B, H3 and H4 assembled in one H3-H4 heterotetramer and two H2A-H2B heterodimers. The octamer wraps approximately 147 bp of DNA. Interacts with TONSL; CHAF1A; CHAF1B; MCM2 and DNAJC9. Interacts with NASP; NASP is a histone chaperone that stabilizes and maintains a soluble pool of Histone H3-H4 dimers. Acetylation is generally linked to gene activation. Acetylation on Lys-10 (H3K9ac) impairs methylation at Arg-9 (H3R8me2s). Acetylation on Lys-19 (H3K18ac) and Lys-24 (H3K24ac) favors methylation at Arg-18 (H3R17me). Acetylation at Lys-123 (H3K122ac) by EP300/p300 plays a central role in chromatin structure: localizes at the surface of the histone octamer and stimulates transcription, possibly by promoting nucleosome instability. In terms of processing, citrullination at Arg-9 (H3R8ci) and/or Arg-18 (H3R17ci) by PADI4 impairs methylation and represses transcription. Post-translationally, asymmetric dimethylation at Arg-18 (H3R17me2a) by CARM1 is linked to gene activation. Symmetric dimethylation at Arg-9 (H3R8me2s) by PRMT5 is linked to gene repression. Asymmetric dimethylation at Arg-3 (H3R2me2a) by PRMT6 is linked to gene repression and is mutually exclusive with H3 Lys-5 methylation (H3K4me2 and H3K4me3). H3R2me2a is present at the 3' of genes regardless of their transcription state and is enriched on inactive promoters, while it is absent on active promoters. Methylation at Lys-5 (H3K4me), Lys-37 (H3K36me) and Lys-80 (H3K79me) are linked to gene activation. Methylation at Lys-5 (H3K4me) facilitates subsequent acetylation of H3 and H4. Methylation at Lys-80 (H3K79me) is associated with DNA double-strand break (DSB) responses and is a specific target for TP53BP1. Methylation at Lys-10 (H3K9me) and Lys-28 (H3K27me) are linked to gene repression. Methylation at Lys-10 (H3K9me) is a specific target for HP1 proteins (CBX1, CBX3 and CBX5) and prevents subsequent phosphorylation at Ser-11 (H3S10ph) and acetylation of H3 and H4. Methylation at Lys-5 (H3K4me) and Lys-80 (H3K79me) require preliminary monoubiquitination of H2B at 'Lys-120'. Methylation at Lys-10 (H3K9me) and Lys-28 (H3K27me) are enriched in inactive X chromosome chromatin. Monomethylation at Lys-57 (H3K56me1) by EHMT2/G9A in G1 phase promotes interaction with PCNA and is required for DNA replication. In terms of processing, phosphorylated at Thr-4 (H3T3ph) by VRK1. Phosphorylated at Thr-4 (H3T3ph) by HASPIN during prophase and dephosphorylated during anaphase. Phosphorylation at Ser-11 (H3S10ph) by AURKB is crucial for chromosome condensation and cell-cycle progression during mitosis and meiosis. In addition phosphorylation at Ser-11 (H3S10ph) by RPS6KA4 and RPS6KA5 is important during interphase because it enables the transcription of genes following external stimulation, like mitogens, stress, growth factors or UV irradiation and result in the activation of genes, such as c-fos and c-jun. Phosphorylation at Ser-11 (H3S10ph), which is linked to gene activation, prevents methylation at Lys-10 (H3K9me) but facilitates acetylation of H3 and H4. Phosphorylation at Ser-11 (H3S10ph) by AURKB mediates the dissociation of HP1 proteins (CBX1, CBX3 and CBX5) from heterochromatin. Phosphorylation at Ser-11 (H3S10ph) is also an essential regulatory mechanism for neoplastic cell transformation. Phosphorylated at Ser-29 (H3S28ph) by MAP3K20 isoform 1, RPS6KA5 or AURKB during mitosis or upon ultraviolet B irradiation. Phosphorylation at Thr-7 (H3T6ph) by PRKCB is a specific tag for epigenetic transcriptional activation that prevents demethylation of Lys-5 (H3K4me) by LSD1/KDM1A. At centromeres, specifically phosphorylated at Thr-12 (H3T11ph) from prophase to early anaphase, by DAPK3 and PKN1. Phosphorylation at Thr-12 (H3T11ph) by PKN1 or isoform M2 of PKM (PKM2) is a specific tag for epigenetic transcriptional activation that promotes demethylation of Lys-10 (H3K9me) by KDM4C/JMJD2C. Phosphorylation at Thr-12 (H3T11ph) by chromatin-associated CHEK1 regulates the transcription of cell cycle regulatory genes by modulating acetylation of Lys-10 (H3K9ac). Phosphorylation at Tyr-42 (H3Y41ph) by JAK2 promotes exclusion of CBX5 (HP1 alpha) from chromatin. Post-translationally, monoubiquitinated by RAG1 in lymphoid cells, monoubiquitination is required for V(D)J recombination. Ubiquitinated by the CUL4-DDB-RBX1 complex in response to ultraviolet irradiation. This may weaken the interaction between histones and DNA and facilitate DNA accessibility to repair proteins. Lysine deamination at Lys-5 (H3K4all) to form allysine is mediated by LOXL2. Allysine formation by LOXL2 only takes place on H3K4me3 and results in gene repression. In terms of processing, crotonylation (Kcr) is specifically present in male germ cells and marks testis-specific genes in post-meiotic cells, including X-linked genes that escape sex chromosome inactivation in haploid cells. Crotonylation marks active promoters and enhancers and confers resistance to transcriptional repressors. It is also associated with post-meiotically activated genes on autosomes. Post-translationally, butyrylation of histones marks active promoters and competes with histone acetylation. It is present during late spermatogenesis. Succinylation at Lys-80 (H3K79succ) by KAT2A takes place with a maximum frequency around the transcription start sites of genes. It gives a specific tag for epigenetic transcription activation. Desuccinylation at Lys-123 (H3K122succ) by SIRT7 in response to DNA damage promotes chromatin condensation and double-strand breaks (DSBs) repair. In terms of processing, serine ADP-ribosylation by PARP1 or PARP2 constitutes the primary form of ADP-ribosylation of proteins in response to DNA damage. Serine ADP-ribosylation at Ser-11 (H3S10ADPr) promotes recruitment of CHD1L. H3S10ADPr is mutually exclusive with phosphorylation at Ser-11 (H3S10ph) and impairs acetylation at Lys-10 (H3K9ac). Post-translationally, serotonylated by TGM2 at Gln-6 (H3Q5ser) during serotonergic neuron differentiation. H3Q5ser is associated with trimethylation of Lys-5 (H3K4me3) and enhances general transcription factor IID (TFIID) complex-binding to H3K4me3, thereby facilitating transcription. Dopaminylated by TGM2 at Gln-6 (H3Q5dop) in ventral tegmental area (VTA) neurons. H3Q5dop mediates neurotransmission-independent role of nuclear dopamine by regulating relapse-related transcriptional plasticity in the reward system. In terms of processing, lactylated in macrophages by EP300/P300 by using lactoyl-CoA directly derived from endogenous or exogenous lactate, leading to stimulates gene transcription.

Its subcellular location is the nucleus. The protein resides in the chromosome. In terms of biological role, core component of nucleosome. Nucleosomes wrap and compact DNA into chromatin, limiting DNA accessibility to the cellular machineries which require DNA as a template. Histones thereby play a central role in transcription regulation, DNA repair, DNA replication and chromosomal stability. DNA accessibility is regulated via a complex set of post-translational modifications of histones, also called histone code, and nucleosome remodeling. The polypeptide is Histone H3.1 (Homo sapiens (Human)).